The sequence spans 855 residues: Pre-mRNA-splicing factor SYF1 (855 aa).

HAT repeat units lie at residues 15-47 (LVFEEEDLPYEEEIMRNQFSVKCWLRYIEFKQG), 48-80 (APKPRLNQLYERALKLLPCSYKLWYRYLKARRA), 90-122 (PAYEDVNNCHERAFVFMHKMPRLWLDYCQFLMD), 124-158 (GRVTHTRRTFDRALRALPITQHSRIWPLYLRFLRS), 160-192 (PLPETAVRGYRRFLKLSPESAEEYIEYLKSSDR), 198-230 (QRLATVVNDERFVSKAGKSNYQLWHELCDLISQ), 235-268 (VQSLNVDAIIRGGLTRFTDQLGKLWCSLADYYIR), 270-305 (GHFEKARDVYEEAIRTVMTVRDFTQVFDSYAQFEES), and 369-407 (GRPREIINTYTEAVQTVDPFKATGKPHTLWVAFAKFYED). K420 carries the post-translational modification N6-acetyllysine. 5 HAT repeats span residues 498–530 (GTFQSTKAVYDRILDLRIATPQIVINYAMFLEE), 532–566 (KYFEESFKAYERGISLFKWPNVSDIWSTYLTKFIS), 571–605 (RKLERARDLFEQALDGCPPKYAKTLYLLYAQLEEE), 643–677 (YGVTHTRGIYQKAIEVLSDEHAREMCLRFADMECK), and 679–713 (GEIDRARAIYSFCSQICDPRTTGAFWQTWKDFEVR). Positions 808-855 (AELAQQANPEEIQLGEDEDEDEMDLEPNEVRLEQQSVPAAVFGSLKED) are disordered. Residues 820–834 (QLGEDEDEDEMDLEP) show a composition bias toward acidic residues. At S851 the chain carries Phosphoserine.

Belongs to the crooked-neck family. Associates with RNA polymerase II, the TCR-specific proteins CKN1/CSA and ERCC6/CSB, and XPA. Identified in the spliceosome C complex. Component of the XAB2 complex, a multimeric protein complex composed of XAB2, PRPF19, AQR, ZNF830, ISY1, and PPIE. Identified in a pentameric intron-binding (IB) complex composed of AQR, XAB2, ISY1, ZNF830 and PPIE that is incorporated into the spliceosome as a preassembled complex. The IB complex does not contain PRPF19.

The protein localises to the nucleus. Its function is as follows. Involved in pre-mRNA splicing as component of the spliceosome. Involved in transcription-coupled repair (TCR), transcription and pre-mRNA splicing. This is Pre-mRNA-splicing factor SYF1 (Xab2) from Mus musculus (Mouse).